The chain runs to 157 residues: Crossover junction endodeoxyribonuclease RuvC (157 aa).

Catalysis depends on residues Asp7, Glu67, and Asp139. Residues Asp7, Glu67, and Asp139 each coordinate Mg(2+).

This sequence belongs to the RuvC family. As to quaternary structure, homodimer which binds Holliday junction (HJ) DNA. The HJ becomes 2-fold symmetrical on binding to RuvC with unstacked arms; it has a different conformation from HJ DNA in complex with RuvA. In the full resolvosome a probable DNA-RuvA(4)-RuvB(12)-RuvC(2) complex forms which resolves the HJ. It depends on Mg(2+) as a cofactor.

It is found in the cytoplasm. The enzyme catalyses Endonucleolytic cleavage at a junction such as a reciprocal single-stranded crossover between two homologous DNA duplexes (Holliday junction).. Its function is as follows. The RuvA-RuvB-RuvC complex processes Holliday junction (HJ) DNA during genetic recombination and DNA repair. Endonuclease that resolves HJ intermediates. Cleaves cruciform DNA by making single-stranded nicks across the HJ at symmetrical positions within the homologous arms, yielding a 5'-phosphate and a 3'-hydroxyl group; requires a central core of homology in the junction. The consensus cleavage sequence is 5'-(A/T)TT(C/G)-3'. Cleavage occurs on the 3'-side of the TT dinucleotide at the point of strand exchange. HJ branch migration catalyzed by RuvA-RuvB allows RuvC to scan DNA until it finds its consensus sequence, where it cleaves and resolves the cruciform DNA. This chain is Crossover junction endodeoxyribonuclease RuvC, found in Prochlorococcus marinus (strain MIT 9312).